A 323-amino-acid chain; its full sequence is Acetyl esterase (323 aa).

The Involved in the stabilization of the negatively charged intermediate by the formation of the oxyanion hole signature appears at 91–93 (HGG). Active-site residues include serine 165, aspartate 262, and histidine 292.

Belongs to the 'GDXG' lipolytic enzyme family. As to quaternary structure, homodimer. Interacts with MalT and MelA.

It localises to the cytoplasm. Its function is as follows. Displays esterase activity towards short chain fatty esters (acyl chain length of up to 8 carbons). Able to hydrolyze triacetylglycerol (triacetin) and tributyrylglycerol (tributyrin), but not trioleylglycerol (triolein) or cholesterol oleate. Negatively regulates MalT activity by antagonizing maltotriose binding. Inhibits MelA galactosidase activity. The sequence is that of Acetyl esterase from Salmonella dublin (strain CT_02021853).